Reading from the N-terminus, the 682-residue chain is Potassium-transporting ATPase ATP-binding subunit (682 aa).

The next 4 membrane-spanning stretches (helical) occupy residues 34–54 (PVMF…IAMA), 62–82 (ALFS…ANFA), 219–239 (IALT…TATL), and 254–274 (VLVA…LSAI). Asp307 serves as the catalytic 4-aspartylphosphate intermediate. ATP is bound by residues Asp344, Glu348, 377-384 (FTAQSRMS), and Lys395. Mg(2+) contacts are provided by Asp518 and Asp522. The next 3 helical transmembrane spans lie at 588–608 (FAII…LNIM), 616–636 (AILS…PLAL), and 656–676 (IYGL…DLLL).

This sequence belongs to the cation transport ATPase (P-type) (TC 3.A.3) family. Type IA subfamily. In terms of assembly, the system is composed of three essential subunits: KdpA, KdpB and KdpC.

It is found in the cell inner membrane. It carries out the reaction K(+)(out) + ATP + H2O = K(+)(in) + ADP + phosphate + H(+). In terms of biological role, part of the high-affinity ATP-driven potassium transport (or Kdp) system, which catalyzes the hydrolysis of ATP coupled with the electrogenic transport of potassium into the cytoplasm. This subunit is responsible for energy coupling to the transport system and for the release of the potassium ions to the cytoplasm. This is Potassium-transporting ATPase ATP-binding subunit from Escherichia coli O157:H7 (strain EC4115 / EHEC).